Reading from the N-terminus, the 450-residue chain is Phosphoglucosamine mutase (450 aa).

The active-site Phosphoserine intermediate is serine 102. Mg(2+)-binding residues include serine 102, aspartate 244, aspartate 246, and aspartate 248. Phosphoserine is present on serine 102.

It belongs to the phosphohexose mutase family. Requires Mg(2+) as cofactor. Post-translationally, activated by phosphorylation.

It catalyses the reaction alpha-D-glucosamine 1-phosphate = D-glucosamine 6-phosphate. Catalyzes the conversion of glucosamine-6-phosphate to glucosamine-1-phosphate. The chain is Phosphoglucosamine mutase from Desulfovibrio desulfuricans (strain ATCC 27774 / DSM 6949 / MB).